A 337-amino-acid chain; its full sequence is MQPDSYPKILFGLTLLLVITAVISLGIGRYSLSVPQIGQILWAKATALEIDPVQQQVIFQVRLPRILTALCVGAGLALSGVVLQGIFRNPLVNPHIIGVTSGSAFGGTLAIFFGFSLYGLFTSTILFGFGTLALVFLFSFKFNQRSLLMLILIGMILSGLFSALVSLLQYISDTEEKLPSIVFWLMGSFATSNWEKLLFFFVPFLLCSSILLSLSWRLNLLSLDEKEAKALGVKMAPLRWLVIFLSGSLVACQVAISGSIGWVGLIIPHLSRMLVGANHQSLLPCTMLVGATYMLLVDNVARSLSDAEIPISILTALIGAPLFGVLVYKLKRGGMNE.

At 1-5 (MQPDS) the chain is on the cytoplasmic side. The helical transmembrane segment at 6 to 25 (YPKILFGLTLLLVITAVISL) threads the bilayer. Over 26-51 (GIGRYSLSVPQIGQILWAKATALEID) the chain is Periplasmic. A helical membrane pass occupies residues 52-87 (PVQQQVIFQVRLPRILTALCVGAGLALSGVVLQGIF). The Cytoplasmic segment spans residues 88–98 (RNPLVNPHIIG). The chain crosses the membrane as a helical span at residues 99–113 (VTSGSAFGGTLAIFF). Topologically, residues 114–116 (GFS) are periplasmic. A helical membrane pass occupies residues 117–140 (LYGLFTSTILFGFGTLALVFLFSF). Over 141-146 (KFNQRS) the chain is Cytoplasmic. A helical transmembrane segment spans residues 147–171 (LLMLILIGMILSGLFSALVSLLQYI). The Periplasmic portion of the chain corresponds to 172 to 193 (SDTEEKLPSIVFWLMGSFATSN). A helical membrane pass occupies residues 194–214 (WEKLLFFFVPFLLCSSILLSL). At 215–234 (SWRLNLLSLDEKEAKALGVK) the chain is on the cytoplasmic side. The chain crosses the membrane as a helical span at residues 235–257 (MAPLRWLVIFLSGSLVACQVAIS). Over 258-264 (GSIGWVG) the chain is Periplasmic. The helical transmembrane segment at 265-275 (LIIPHLSRMLV) threads the bilayer. At 276–278 (GAN) the chain is on the cytoplasmic side. A helical membrane pass occupies residues 279–304 (HQSLLPCTMLVGATYMLLVDNVARSL). Over 305-310 (SDAEIP) the chain is Periplasmic. A helical membrane pass occupies residues 311–329 (ISILTALIGAPLFGVLVYK). At 330–337 (LKRGGMNE) the chain is on the cytoplasmic side.

It belongs to the binding-protein-dependent transport system permease family. FecCD subfamily. The complex is composed of two ATP-binding proteins (MolC), two transmembrane proteins (MolB) and a solute-binding protein (MolA).

Its subcellular location is the cell inner membrane. The MolBCA complex shows a decrease in affinity in the presence of increasing concentrations of substrate and nucleotide. Part of the ABC transporter complex MolBCA involved in molybdate import. Responsible for the translocation of the substrate across the membrane. Functions as a low-affinity molybdate transporter. This is Molybdate import system permease protein MolB from Haemophilus influenzae (strain ATCC 51907 / DSM 11121 / KW20 / Rd).